A 328-amino-acid chain; its full sequence is Gonadotropin-releasing hormone receptor (328 aa).

Residues 1–38 (MANSASPEQNQNHCSASNSSIPLTQANLPTLTLSGKIR) lie on the Extracellular side of the membrane. Asparagine 18 carries an N-linked (GlcNAc...) asparagine glycan. The helical transmembrane segment at 39–59 (VTVTFFLFLLSTTFNASFLLK) threads the bilayer. At 60-84 (LHKWTQKKENGKKLSKMKVLLKHLT) the chain is on the cytoplasmic side. Residues 85 to 105 (LANLLETLIVMPLDGMWNITV) traverse the membrane as a helical segment. The Extracellular portion of the chain corresponds to 106–115 (QWYAGELLCK). Cysteine 114 and cysteine 196 form a disulfide bridge. A helical membrane pass occupies residues 116–136 (VLSYLKLFSMYAPAFMMVVIS). Topologically, residues 137-157 (LDRSLAITRPLAVKSNSKLGR) are cytoplasmic. A helical membrane pass occupies residues 158-178 (SMIGLAWLLSSIFAGPQLYIF). The Extracellular portion of the chain corresponds to 179-208 (RMIHLADSSGQTEGFSQCVTHCSFPQWWHQ). Residues 209–229 (AFYNFFTFSCLFIIPLLFMLI) form a helical membrane-spanning segment. The Cytoplasmic portion of the chain corresponds to 230 to 271 (CNAKIIFTLTRVLHQDPHKLQLNQSKNNIPRARLRTLKMTVA). The helical transmembrane segment at 272 to 292 (FATSFTVCWTPYYVLGIWYWF) threads the bilayer. At 293 to 306 (DPEMLNRVSDPVNH) the chain is on the extracellular side. The helical transmembrane segment at 307 to 327 (FFFLFALLNPCFDPLIYGYFS) threads the bilayer. Residue leucine 328 is a topological domain, cytoplasmic.

Belongs to the G-protein coupled receptor 1 family.

The protein resides in the cell membrane. In terms of biological role, receptor for gonadotropin releasing hormone (GnRH) that mediates the action of GnRH to stimulate the secretion of the gonadotropic hormones luteinizing hormone (LH) and follicle-stimulating hormone (FSH). This receptor mediates its action by association with G-proteins that activate a phosphatidylinositol-calcium second messenger system. The protein is Gonadotropin-releasing hormone receptor (GNRHR) of Equus caballus (Horse).